A 341-amino-acid polypeptide reads, in one-letter code: UDP-N-acetyl-alpha-D-glucosaminouronate 4-epimerase (341 aa).

Phenylalanine 27, isoleucine 28, aspartate 47, alanine 50, threonine 51, glycine 52, aspartate 78, isoleucine 79, and glutamine 98 together coordinate NAD(+). Serine 103 is a binding site for UDP-N-acetyl-alpha-D-galactosamine. Threonine 117 is a binding site for NAD(+). UDP-N-acetyl-alpha-D-galactosamine is bound by residues serine 142, serine 143, and tyrosine 166. NAD(+) contacts are provided by tyrosine 166 and lysine 170. The active-site Proton acceptor is tyrosine 166. Asparagine 195 is a UDP-N-acetyl-alpha-D-galactosamine binding site. Position 196 (valine 196) interacts with NAD(+). UDP-N-acetyl-alpha-D-galactosamine-binding residues include valine 210, tyrosine 225, asparagine 227, arginine 234, arginine 299, and aspartate 302.

The protein belongs to the NAD(P)-dependent epimerase/dehydratase family. As to quaternary structure, homodimer. It depends on NAD(+) as a cofactor.

It carries out the reaction UDP-2-acetamido-2-deoxy-alpha-D-glucuronate = UDP-2-acetamido-2-deoxy-alpha-D-galacturonate. The enzyme catalyses UDP-N-acetyl-alpha-D-glucosamine = UDP-N-acetyl-alpha-D-galactosamine. It participates in bacterial outer membrane biogenesis; LPS O-antigen biosynthesis. In terms of biological role, epimerase required for the biosynthesis of the B-band O antigen of serotype O6 lipopolysaccharide. Catalyzes the reversible epimerization of UDP-N-acetylglucosaminuronic acid (UDP-GlcNAcA) to UDP-N-acetylgalactosaminuronic acid (UDP-GalNAcA). Also catalyzes the reversible epimerization of UDP-N-acetylglucosamine (UDP-GlcNAc) to UDP-N-acetylgalactosamine (UDP-GalNAc). Has very low epimerase activity with UDP-glucose (UDP-Glc) and UDP-galactose (UDP-Gal). The sequence is that of UDP-N-acetyl-alpha-D-glucosaminouronate 4-epimerase from Pseudomonas aeruginosa.